The following is a 236-amino-acid chain: Phosphatidylserine decarboxylase proenzyme (236 aa).

Ser203 acts as the Schiff-base intermediate with substrate; via pyruvic acid in catalysis. Residue Ser203 is modified to Pyruvic acid (Ser); by autocatalysis.

It belongs to the phosphatidylserine decarboxylase family. PSD-A subfamily. In terms of assembly, heterodimer of a large membrane-associated beta subunit and a small pyruvoyl-containing alpha subunit. Pyruvate is required as a cofactor. In terms of processing, is synthesized initially as an inactive proenzyme. Formation of the active enzyme involves a self-maturation process in which the active site pyruvoyl group is generated from an internal serine residue via an autocatalytic post-translational modification. Two non-identical subunits are generated from the proenzyme in this reaction, and the pyruvate is formed at the N-terminus of the alpha chain, which is derived from the carboxyl end of the proenzyme. The post-translation cleavage follows an unusual pathway, termed non-hydrolytic serinolysis, in which the side chain hydroxyl group of the serine supplies its oxygen atom to form the C-terminus of the beta chain, while the remainder of the serine residue undergoes an oxidative deamination to produce ammonia and the pyruvoyl prosthetic group on the alpha chain.

Its subcellular location is the cell membrane. It catalyses the reaction a 1,2-diacyl-sn-glycero-3-phospho-L-serine + H(+) = a 1,2-diacyl-sn-glycero-3-phosphoethanolamine + CO2. It functions in the pathway phospholipid metabolism; phosphatidylethanolamine biosynthesis; phosphatidylethanolamine from CDP-diacylglycerol: step 2/2. Catalyzes the formation of phosphatidylethanolamine (PtdEtn) from phosphatidylserine (PtdSer). The sequence is that of Phosphatidylserine decarboxylase proenzyme from Saccharopolyspora erythraea (strain ATCC 11635 / DSM 40517 / JCM 4748 / NBRC 13426 / NCIMB 8594 / NRRL 2338).